We begin with the raw amino-acid sequence, 344 residues long: S-methyl-5'-thioadenosine phosphorylase (344 aa).

Residues T45, 88–89 (RH), and 121–122 (SA) each bind phosphate. M238 contributes to the substrate binding site. S239 contributes to the phosphate binding site. 262–264 (DYD) is a substrate binding site.

This sequence belongs to the PNP/MTAP phosphorylase family. MTAP subfamily. Homotrimer.

The protein localises to the cytoplasm. Its subcellular location is the nucleus. The enzyme catalyses S-methyl-5'-thioadenosine + phosphate = 5-(methylsulfanyl)-alpha-D-ribose 1-phosphate + adenine. The protein operates within amino-acid biosynthesis; L-methionine biosynthesis via salvage pathway; S-methyl-5-thio-alpha-D-ribose 1-phosphate from S-methyl-5'-thioadenosine (phosphorylase route): step 1/1. Functionally, catalyzes the reversible phosphorylation of S-methyl-5'-thioadenosine (MTA) to adenine and 5-methylthioribose-1-phosphate. Involved in the breakdown of MTA, a major by-product of polyamine biosynthesis. Responsible for the first step in the methionine salvage pathway after MTA has been generated from S-adenosylmethionine. Has broad substrate specificity with 6-aminopurine nucleosides as preferred substrates. This is S-methyl-5'-thioadenosine phosphorylase from Candida albicans (strain WO-1) (Yeast).